The following is a 103-amino-acid chain: Enhancer of rudimentary homolog (103 aa).

The protein belongs to the E(R) family. Homodimer.

May have a role in the cell cycle. The sequence is that of Enhancer of rudimentary homolog from Aedes aegypti (Yellowfever mosquito).